The sequence spans 297 residues: UDP-N-acetylenolpyruvoylglucosamine reductase (297 aa).

In terms of domain architecture, FAD-binding PCMH-type spans 18–184 (QVGGPAEWYL…LSARLRLAPG (167 aa)). R163 is a catalytic residue. S214 serves as the catalytic Proton donor. The active site involves E285.

FAD is required as a cofactor.

It is found in the cytoplasm. The catalysed reaction is UDP-N-acetyl-alpha-D-muramate + NADP(+) = UDP-N-acetyl-3-O-(1-carboxyvinyl)-alpha-D-glucosamine + NADPH + H(+). The protein operates within cell wall biogenesis; peptidoglycan biosynthesis. In terms of biological role, cell wall formation. The polypeptide is UDP-N-acetylenolpyruvoylglucosamine reductase (Gloeobacter violaceus (strain ATCC 29082 / PCC 7421)).